A 139-amino-acid chain; its full sequence is MDEKSILTINVVTPDGSVYENTTDLVICKTTVGEIGIMPNHLPLLASLAIDEVRVKVDDENFDEIAVSGGFVEFSDNTLSVVASAAERKETIDVSRAERAKQRAEKRIEEAKNENNDIDLRRAEVSLRRAINRLNISKH.

This sequence belongs to the ATPase epsilon chain family. In terms of assembly, F-type ATPases have 2 components, CF(1) - the catalytic core - and CF(0) - the membrane proton channel. CF(1) has five subunits: alpha(3), beta(3), gamma(1), delta(1), epsilon(1). CF(0) has three main subunits: a, b and c.

The protein localises to the cell membrane. Produces ATP from ADP in the presence of a proton gradient across the membrane. The polypeptide is ATP synthase epsilon chain (Ligilactobacillus salivarius (strain UCC118) (Lactobacillus salivarius)).